A 441-amino-acid chain; its full sequence is Probable D-serine dehydratase (441 aa).

An N6-(pyridoxal phosphate)lysine modification is found at Lys115.

The protein belongs to the serine/threonine dehydratase family. DsdA subfamily. It depends on pyridoxal 5'-phosphate as a cofactor.

It catalyses the reaction D-serine = pyruvate + NH4(+). This is Probable D-serine dehydratase from Fusobacterium nucleatum subsp. nucleatum (strain ATCC 25586 / DSM 15643 / BCRC 10681 / CIP 101130 / JCM 8532 / KCTC 2640 / LMG 13131 / VPI 4355).